The following is a 62-amino-acid chain: MKASELKAKTVDELKAELLSLLKAQFALRMQHATQQLAKTSELKKVRRDIARVRTVLKEKAV.

It belongs to the universal ribosomal protein uL29 family.

The polypeptide is Large ribosomal subunit protein uL29 (Chromobacterium violaceum (strain ATCC 12472 / DSM 30191 / JCM 1249 / CCUG 213 / NBRC 12614 / NCIMB 9131 / NCTC 9757 / MK)).